The sequence spans 754 residues: 5-methyltetrahydropteroyltriglutamate--homocysteine methyltransferase (754 aa).

5-methyltetrahydropteroyltri-L-glutamate contacts are provided by residues 17–20 (RELK) and K117. L-homocysteine is bound by residues 431–433 (IGS) and E484. L-methionine contacts are provided by residues 431-433 (IGS) and E484. Residues 515-516 (RC) and W561 each bind 5-methyltetrahydropteroyltri-L-glutamate. D599 is an L-homocysteine binding site. D599 provides a ligand contact to L-methionine. E605 contributes to the 5-methyltetrahydropteroyltri-L-glutamate binding site. Zn(2+) contacts are provided by H641, C643, and E665. The Proton donor role is filled by H694. C726 is a binding site for Zn(2+).

This sequence belongs to the vitamin-B12 independent methionine synthase family. It depends on Zn(2+) as a cofactor.

It carries out the reaction 5-methyltetrahydropteroyltri-L-glutamate + L-homocysteine = tetrahydropteroyltri-L-glutamate + L-methionine. It functions in the pathway amino-acid biosynthesis; L-methionine biosynthesis via de novo pathway; L-methionine from L-homocysteine (MetE route): step 1/1. Functionally, catalyzes the transfer of a methyl group from 5-methyltetrahydrofolate to homocysteine resulting in methionine formation. This is 5-methyltetrahydropteroyltriglutamate--homocysteine methyltransferase from Salmonella paratyphi B (strain ATCC BAA-1250 / SPB7).